A 209-amino-acid chain; its full sequence is Kynurenine formamidase (209 aa).

Trp19 is a binding site for substrate. Residues His49, His53, and Asp55 each contribute to the Zn(2+) site. His59 acts as the Proton donor/acceptor in catalysis. The Zn(2+) site is built by His160 and Glu172.

Belongs to the Cyclase 1 superfamily. KynB family. In terms of assembly, homodimer. Requires Zn(2+) as cofactor.

The enzyme catalyses N-formyl-L-kynurenine + H2O = L-kynurenine + formate + H(+). It functions in the pathway amino-acid degradation; L-tryptophan degradation via kynurenine pathway; L-kynurenine from L-tryptophan: step 2/2. Catalyzes the hydrolysis of N-formyl-L-kynurenine to L-kynurenine, the second step in the kynurenine pathway of tryptophan degradation. This chain is Kynurenine formamidase, found in Geobacillus thermodenitrificans (strain NG80-2).